The following is a 278-amino-acid chain: Sulfur carrier protein FdhD (278 aa).

Catalysis depends on C121, which acts as the Cysteine persulfide intermediate. 260 to 265 (FCKPGR) provides a ligand contact to Mo-bis(molybdopterin guanine dinucleotide).

This sequence belongs to the FdhD family.

It localises to the cytoplasm. Required for formate dehydrogenase (FDH) activity. Acts as a sulfur carrier protein that transfers sulfur from IscS to the molybdenum cofactor prior to its insertion into FDH. In Salmonella newport (strain SL254), this protein is Sulfur carrier protein FdhD.